Here is a 517-residue protein sequence, read N- to C-terminus: UDP-N-acetylmuramoyl-L-alanyl-D-glutamate--2,6-diaminopimelate ligase (517 aa).

2 residues coordinate UDP-N-acetyl-alpha-D-muramoyl-L-alanyl-D-glutamate: Leu34 and Ser36. 122–128 lines the ATP pocket; it reads GTSGKTT. UDP-N-acetyl-alpha-D-muramoyl-L-alanyl-D-glutamate is bound by residues 164–165, Ser191, and Arg199; that span reads TT. At Lys231 the chain carries N6-carboxylysine. Residues Arg394, 418-421, Gly476, and Glu480 contribute to the meso-2,6-diaminopimelate site; that span reads DNPR. Residues 418 to 421 carry the Meso-diaminopimelate recognition motif motif; that stretch reads DNPR.

It belongs to the MurCDEF family. MurE subfamily. It depends on Mg(2+) as a cofactor. Carboxylation is probably crucial for Mg(2+) binding and, consequently, for the gamma-phosphate positioning of ATP.

It localises to the cytoplasm. It carries out the reaction UDP-N-acetyl-alpha-D-muramoyl-L-alanyl-D-glutamate + meso-2,6-diaminopimelate + ATP = UDP-N-acetyl-alpha-D-muramoyl-L-alanyl-gamma-D-glutamyl-meso-2,6-diaminopimelate + ADP + phosphate + H(+). It functions in the pathway cell wall biogenesis; peptidoglycan biosynthesis. In terms of biological role, catalyzes the addition of meso-diaminopimelic acid to the nucleotide precursor UDP-N-acetylmuramoyl-L-alanyl-D-glutamate (UMAG) in the biosynthesis of bacterial cell-wall peptidoglycan. This is UDP-N-acetylmuramoyl-L-alanyl-D-glutamate--2,6-diaminopimelate ligase from Corynebacterium glutamicum (strain ATCC 13032 / DSM 20300 / JCM 1318 / BCRC 11384 / CCUG 27702 / LMG 3730 / NBRC 12168 / NCIMB 10025 / NRRL B-2784 / 534).